The following is a 343-amino-acid chain: Fiber protein (343 aa).

Belongs to the adenoviridae fiber family. In terms of assembly, homotrimer. Interacts with host receptor CD46. Interacts (via N-terminal tail region) with pentons.

The protein resides in the virion. It localises to the host nucleus. In terms of biological role, forms spikes that protrude from each vertex of the icosahedral capsid. Interacts with host receptor CD46 to provide virion initial attachment to target cell. Fiber proteins are shed during virus entry, when virus is still at the cell surface. The chain is Fiber protein from Homo sapiens (Human).